Consider the following 142-residue polypeptide: Nucleoside diphosphate kinase (142 aa).

Residues Lys-11, Phe-59, Arg-87, Thr-93, Arg-104, and Asn-114 each coordinate ATP. The active-site Pros-phosphohistidine intermediate is the His-117.

The protein belongs to the NDK family. In terms of assembly, homotetramer. It depends on Mg(2+) as a cofactor.

The protein resides in the cytoplasm. It catalyses the reaction a 2'-deoxyribonucleoside 5'-diphosphate + ATP = a 2'-deoxyribonucleoside 5'-triphosphate + ADP. The catalysed reaction is a ribonucleoside 5'-diphosphate + ATP = a ribonucleoside 5'-triphosphate + ADP. Major role in the synthesis of nucleoside triphosphates other than ATP. The ATP gamma phosphate is transferred to the NDP beta phosphate via a ping-pong mechanism, using a phosphorylated active-site intermediate. This Aeromonas hydrophila subsp. hydrophila (strain ATCC 7966 / DSM 30187 / BCRC 13018 / CCUG 14551 / JCM 1027 / KCTC 2358 / NCIMB 9240 / NCTC 8049) protein is Nucleoside diphosphate kinase.